We begin with the raw amino-acid sequence, 443 residues long: Putative F-box/FBD/LRR-repeat protein At3g49030 (443 aa).

The region spanning 20 to 68 (EDRISELPEDLLLQILSDIPTENVIATSVLSKRWRSLWKMVPNLTFDFT) is the F-box domain. 6 LRR repeats span residues 74–100 (HQTF…QLNF), 152–179 (ILEI…RLYE), 180–205 (VHFK…SVHR), 218–252 (VPSL…NIVG), 272–297 (ISDV…SLES), and 320–345 (KERE…KLTG). The region spanning 357–408 (NWNPPKCVPECLLFHLEKFLWTGYEWQRGDEKEVATYILENARLLKKATFST) is the FBD domain.

This is Putative F-box/FBD/LRR-repeat protein At3g49030 from Arabidopsis thaliana (Mouse-ear cress).